A 463-amino-acid polypeptide reads, in one-letter code: tRNA-2-methylthio-N(6)-dimethylallyladenosine synthase (463 aa).

Residues Gly19–Ser135 form the MTTase N-terminal domain. Cys28, Cys64, Cys98, Cys170, Cys174, and Cys177 together coordinate [4Fe-4S] cluster. The Radical SAM core domain occupies Arg156–Glu393. A TRAM domain is found at Gln396–Leu463.

Belongs to the methylthiotransferase family. MiaB subfamily. Monomer. It depends on [4Fe-4S] cluster as a cofactor.

Its subcellular location is the cytoplasm. The enzyme catalyses N(6)-dimethylallyladenosine(37) in tRNA + (sulfur carrier)-SH + AH2 + 2 S-adenosyl-L-methionine = 2-methylsulfanyl-N(6)-dimethylallyladenosine(37) in tRNA + (sulfur carrier)-H + 5'-deoxyadenosine + L-methionine + A + S-adenosyl-L-homocysteine + 2 H(+). Catalyzes the methylthiolation of N6-(dimethylallyl)adenosine (i(6)A), leading to the formation of 2-methylthio-N6-(dimethylallyl)adenosine (ms(2)i(6)A) at position 37 in tRNAs that read codons beginning with uridine. The chain is tRNA-2-methylthio-N(6)-dimethylallyladenosine synthase from Prochlorococcus marinus (strain NATL2A).